We begin with the raw amino-acid sequence, 256 residues long: UPF0259 membrane protein plu2479 (256 aa).

A run of 5 helical transmembrane segments spans residues 23–43, 89–109, 132–152, 192–212, and 221–241; these read TLTLAVLAALVTTLLGHLFIP, IFSSMIGSVLLVGGVLTLVAA, LFLLLLICTLLIQFGLMLMLV, LLVPAILLWLTARLLLVFIID, and MAGIILGVFNNLISAILLIYL.

Belongs to the UPF0259 family.

Its subcellular location is the cell inner membrane. This Photorhabdus laumondii subsp. laumondii (strain DSM 15139 / CIP 105565 / TT01) (Photorhabdus luminescens subsp. laumondii) protein is UPF0259 membrane protein plu2479.